A 565-amino-acid polypeptide reads, in one-letter code: Amino-acid acetyltransferase, mitochondrial (565 aa).

The disordered stretch occupies residues 38–58; sequence DIATATPAATPSDGAQPPAQN. Positions 352-540 constitute an N-acetyltransferase domain; it reads LPVRVLRSME…EFGGGRLVRV (189 aa).

It belongs to the acetyltransferase family.

It localises to the mitochondrion. The enzyme catalyses L-glutamate + acetyl-CoA = N-acetyl-L-glutamate + CoA + H(+). It functions in the pathway amino-acid biosynthesis; L-arginine biosynthesis; N(2)-acetyl-L-ornithine from L-glutamate: step 1/4. In terms of biological role, N-acetylglutamate synthase involved in arginine biosynthesis. In Cryptococcus neoformans var. neoformans serotype D (strain B-3501A) (Filobasidiella neoformans), this protein is Amino-acid acetyltransferase, mitochondrial (ARG2).